A 244-amino-acid chain; its full sequence is Thaumatin-like protein 1 (244 aa).

A signal peptide spans 1–22 (MKFEALIGLVLVFLSEHAGVYS). Cystine bridges form between cysteine 31–cysteine 243, cysteine 79–cysteine 89, cysteine 94–cysteine 101, cysteine 149–cysteine 232, cysteine 154–cysteine 215, cysteine 162–cysteine 178, cysteine 182–cysteine 191, and cysteine 192–cysteine 202. N-linked (GlcNAc...) asparagine glycosylation is present at asparagine 150.

This sequence belongs to the thaumatin family. N-glycosylated. In terms of tissue distribution, style.

The protein resides in the secreted. This chain is Thaumatin-like protein 1 (TL1), found in Pyrus pyrifolia (Chinese pear).